A 2059-amino-acid chain; its full sequence is Non-reducing polyketide synthase stmB (2059 aa).

Positions 7-243 (LLFGDQTVEL…LKLAAYGAVH (237 aa)) constitute a Starter acyltransferase (SAT) domain. The region spanning 366 to 796 (SNSIAIVGMA…GGNSCLILEE (431 aa)) is the Ketosynthase family 3 (KS3) domain. Catalysis depends on for beta-ketoacyl synthase activity residues cysteine 538, histidine 673, and histidine 713. The Malonyl-CoA:ACP transacylase (MAT) domain occupies 895–1185 (WVFSGQGSQY…CGSMVKATLG (291 aa)). An N-terminal hotdog fold region spans residues 1273–1413 (LHFVKKETVT…SASEWTDEWS (141 aa)). One can recognise a PKS/mFAS DH domain in the interval 1273 to 1581 (LHFVKKETVT…FQRMPRMVLH (309 aa)). Residue histidine 1306 is the Proton acceptor; for dehydratase activity of the active site. A C-terminal hotdog fold region spans residues 1435–1581 (GDHLRRPVVY…FQRMPRMVLH (147 aa)). Aspartate 1495 acts as the Proton donor; for dehydratase activity in catalysis. Residues 1619-1696 (PPKHDLADQL…DARRALGGDE (78 aa)) enclose the Carrier domain. Serine 1656 is modified (O-(pantetheine 4'-phosphoryl)serine). The segment at 1693–1727 (GGDETASESENDAEGDAPSDGGSPSGSWTPISPPE) is disordered. Residues 1697 to 1709 (TASESENDAEGDA) are compositionally biased toward acidic residues. Residues 1710–1719 (PSDGGSPSGS) show a composition bias toward low complexity. The thioesterase (TE) domain stretch occupies residues 1778–2059 (AVEYKSNVVL…LGKLLQEAVA (282 aa)).

Pantetheine 4'-phosphate is required as a cofactor.

The protein operates within mycotoxin biosynthesis. Non-reducing polyketide synthase; part of the gene cluster that mediates the biosynthesis of stromemycin, a depside C-glucoside with two unsaturated C9 side chains belonging to aromatic polyketide glycosides. The HR-PKS stmA and the NR-PKS stmB act as scaffold-generating enzymes responsible for the biosynthesis of the polyketide skeleton bininalkenylresorcylic acid. StmA condenses on acetyl-CoA starter unit with 4 malonyl-CoA units and the stmB uses 3 more malonyl-CoA units and catalyzes the depside bond formation. The glycoytransferase stmC then acts as the tailoring enzyme responsible for 3-C-glucosylation of bininalkenylresorcylic acid to yield stromemycin. The protein is Non-reducing polyketide synthase stmB of Aspergillus ustus.